The chain runs to 334 residues: o-succinylbenzoate synthase (334 aa).

The Proton donor role is filled by Lys-107. Mg(2+) is bound by residues Asp-135, Glu-162, and Asp-185. Lys-209 (proton acceptor) is an active-site residue.

It belongs to the mandelate racemase/muconate lactonizing enzyme family. MenC type 1 subfamily. The cofactor is a divalent metal cation.

It catalyses the reaction (1R,6R)-6-hydroxy-2-succinyl-cyclohexa-2,4-diene-1-carboxylate = 2-succinylbenzoate + H2O. It participates in quinol/quinone metabolism; 1,4-dihydroxy-2-naphthoate biosynthesis; 1,4-dihydroxy-2-naphthoate from chorismate: step 4/7. Its pathway is quinol/quinone metabolism; menaquinone biosynthesis. Its function is as follows. Converts 2-succinyl-6-hydroxy-2,4-cyclohexadiene-1-carboxylate (SHCHC) to 2-succinylbenzoate (OSB). This Mycobacterium leprae (strain TN) protein is o-succinylbenzoate synthase.